Reading from the N-terminus, the 1899-residue chain is Protocadherin-15 (1899 aa).

A signal peptide spans Met-1 to Ala-26. The Extracellular segment spans residues Gln-27–Ala-1376. Cysteines 32 and 120 form a disulfide. 11 Cadherin domains span residues Gly-38–Phe-147, Gln-148–Phe-265, Arg-278–Phe-395, Thr-396–Phe-509, Ser-510–Phe-616, Pro-617–Phe-717, Met-719–Phe-819, Thr-820–Phe-926, Ser-927–Phe-1035, Gln-1037–Phe-1144, and Thr-1145–Leu-1259. The chain crosses the membrane as a helical span at residues Leu-1377–Val-1397. Over Ser-1398 to Leu-1899 the chain is Cytoplasmic. 3 disordered regions span residues Ser-1668–Pro-1687, His-1700–Ile-1721, and Thr-1734–Leu-1820. Pro residues-rich tracts occupy residues Leu-1706–Pro-1717 and Pro-1743–Leu-1773. A compositionally biased stretch (low complexity) spans Pro-1774–Ser-1791. The span at Ala-1804–Pro-1814 shows a compositional bias: pro residues.

In terms of tissue distribution, in the utricle, localizes to the distal region of the kinocilium and near the tips of the stereocilia.

It localises to the cell membrane. In terms of biological role, calcium-dependent cell-adhesion protein. Required for inner ear neuroepithelial cell elaboration and cochlear function. Probably involved in the maintenance of normal retinal function. The protein is Protocadherin-15 (Pcdh15) of Gallus gallus (Chicken).